We begin with the raw amino-acid sequence, 453 residues long: tRNA modification GTPase MnmE (453 aa).

Residues Arg-28, Glu-90, and Arg-129 each coordinate (6S)-5-formyl-5,6,7,8-tetrahydrofolate. One can recognise a TrmE-type G domain in the interval 224–375 (GLRVAIIGRP…LSSALLKLCG (152 aa)). Asn-234 lines the K(+) pocket. GTP is bound by residues 234-239 (NVGKSS), 253-259 (TDLPGTT), 278-281 (DTAG), and 356-358 (SAR). Residue Ser-238 coordinates Mg(2+). Residues Thr-253, Leu-255, and Thr-258 each contribute to the K(+) site. Thr-259 serves as a coordination point for Mg(2+). Position 453 (Lys-453) interacts with (6S)-5-formyl-5,6,7,8-tetrahydrofolate.

It belongs to the TRAFAC class TrmE-Era-EngA-EngB-Septin-like GTPase superfamily. TrmE GTPase family. As to quaternary structure, homodimer. Heterotetramer of two MnmE and two MnmG subunits. K(+) serves as cofactor.

The protein localises to the cytoplasm. Its function is as follows. Exhibits a very high intrinsic GTPase hydrolysis rate. Involved in the addition of a carboxymethylaminomethyl (cmnm) group at the wobble position (U34) of certain tRNAs, forming tRNA-cmnm(5)s(2)U34. In Synechococcus sp. (strain RCC307), this protein is tRNA modification GTPase MnmE.